The chain runs to 198 residues: Molybdenum cofactor guanylyltransferase (198 aa).

GTP is bound by residues 14 to 16 (LAG), lysine 27, aspartate 73, and aspartate 103. Aspartate 103 contacts Mg(2+).

Belongs to the MobA family. As to quaternary structure, monomer. Requires Mg(2+) as cofactor.

The protein localises to the cytoplasm. The catalysed reaction is Mo-molybdopterin + GTP + H(+) = Mo-molybdopterin guanine dinucleotide + diphosphate. Transfers a GMP moiety from GTP to Mo-molybdopterin (Mo-MPT) cofactor (Moco or molybdenum cofactor) to form Mo-molybdopterin guanine dinucleotide (Mo-MGD) cofactor. This Pseudomonas aeruginosa (strain LESB58) protein is Molybdenum cofactor guanylyltransferase.